Here is a 978-residue protein sequence, read N- to C-terminus: Retinoblastoma-related protein 2 (978 aa).

Positions 385–585 are domain A; that stretch reads TPVTSAMTTA…EKGSSLYNSL (201 aa). Residues 385-832 form a pocket region; sequence TPVTSAMTTA…NQVFVPTVKP (448 aa). Positions 586-704 are spacer; it reads VVARPSLSTE…PVSGNEKCAV (119 aa). A disordered region spans residues 616 to 645; it reads QSIHPDGLPPTPSKRWPSAGPDGNCYPQSP. Residues 705–832 form a domain B region; the sequence is VGVQIFFSKI…NQVFVPTVKP (128 aa). Disordered regions lie at residues 841–878 and 947–978; these read STRP…SSSH and VAGS…KTDS. The span at 850–864 shows a compositional bias: polar residues; it reads TNSQIPGSPKSSPFS. The span at 958 to 971 shows a compositional bias: low complexity; the sequence is SASSDPAAAFSPLS.

It belongs to the retinoblastoma protein (RB) family.

It localises to the nucleus. Regulator of biological processes that recruits a histone deacetylase to control gene transcription. May play a role in the entry into mitosis, negatively regulating the cell proliferation. Formation of stable complexes with geminiviridae replication-associated proteins may create a cellular environment which favors viral DNA replication. The polypeptide is Retinoblastoma-related protein 2 (RBR2) (Oryza sativa subsp. japonica (Rice)).